The chain runs to 112 residues: Nitrogen regulatory protein GlnK1 (112 aa).

Position 29 (Thr-29) interacts with ADP. ATP-binding residues include Thr-29 and Val-38. Position 52–54 (52–54 (IVD)) interacts with 2-oxoglutarate. Residues Val-64, 88–90 (DGK), and 101–103 (RVR) each bind ADP. ATP is bound by residues Val-64, 86 to 90 (PGDGK), and 101 to 103 (RVR).

The protein belongs to the P(II) protein family. As to quaternary structure, homotrimer. Interacts and forms a complex with Amt1.

The protein localises to the cytoplasm. Formation of the GlnK1/Amt1 complex is decreased in the presence of Mg-ATP or 2-oxoglutarate. The presence of both effectors abolishes the formation of the complex. Involved in the regulation of nitrogen metabolism. Regulates the activity of its targets by protein-protein interaction in response to the nitrogen status of the cell. Regulates the activity of the ammonia channel Amt1 via direct interaction. This is Nitrogen regulatory protein GlnK1 from Methanocaldococcus jannaschii (strain ATCC 43067 / DSM 2661 / JAL-1 / JCM 10045 / NBRC 100440) (Methanococcus jannaschii).